Reading from the N-terminus, the 206-residue chain is D-ribitol-5-phosphate phosphatase (206 aa).

D8 functions as the Nucleophile in the catalytic mechanism. Mg(2+) is bound by residues D8 and D172.

The protein belongs to the HAD-like hydrolase superfamily. Mg(2+) is required as a cofactor.

The enzyme catalyses D-ribitol 1-phosphate + H2O = ribitol + phosphate. It carries out the reaction D-ribitol 5-phosphate + H2O = ribitol + phosphate. The catalysed reaction is 5-amino-6-(5-phospho-D-ribitylamino)uracil + H2O = 5-amino-6-(D-ribitylamino)uracil + phosphate. It functions in the pathway cofactor biosynthesis; riboflavin biosynthesis; 5-amino-6-(D-ribitylamino)uracil from GTP: step 4/4. Functionally, catalyzes the dephosphorylation of D-ribitol-5-phosphate and D-ribitol-1-phosphate. Is also able to dephosphorylate 5-amino-6-(5-phospho-D-ribitylamino)uracil, and thus could be involved in the riboflavin biosynthesis pathway. This is D-ribitol-5-phosphate phosphatase from Bacteroides thetaiotaomicron (strain ATCC 29148 / DSM 2079 / JCM 5827 / CCUG 10774 / NCTC 10582 / VPI-5482 / E50).